The following is a 147-amino-acid chain: 3-dehydroquinate dehydratase (147 aa).

Tyr-23 acts as the Proton acceptor in catalysis. Substrate-binding residues include Asn-74, His-80, and Asp-87. Residue His-100 is the Proton donor of the active site. Residues 101–102 (LS) and Arg-111 each bind substrate.

Belongs to the type-II 3-dehydroquinase family. Homododecamer.

The enzyme catalyses 3-dehydroquinate = 3-dehydroshikimate + H2O. The protein operates within metabolic intermediate biosynthesis; chorismate biosynthesis; chorismate from D-erythrose 4-phosphate and phosphoenolpyruvate: step 3/7. Its function is as follows. Catalyzes a trans-dehydration via an enolate intermediate. This is 3-dehydroquinate dehydratase from Clostridium botulinum (strain Okra / Type B1).